Here is a 127-residue protein sequence, read N- to C-terminus: MNVPAALRYTKDHEWIQLLDDGATALVGITDFAQSELGDIVFVELKPAGTALKEHEIFGTVEAVKTVADLFAPVAGEILEVNAGLDSAETVNQDPYGSGWMVKMKLADPASVANLLDAAAYRELIGG.

The region spanning 24 to 105 (TALVGITDFA…YGSGWMVKMK (82 aa)) is the Lipoyl-binding domain. Lysine 65 is modified (N6-lipoyllysine).

The protein belongs to the GcvH family. The glycine cleavage system is composed of four proteins: P, T, L and H. (R)-lipoate serves as cofactor.

The glycine cleavage system catalyzes the degradation of glycine. The H protein shuttles the methylamine group of glycine from the P protein to the T protein. This chain is Glycine cleavage system H protein, found in Chlorobium luteolum (strain DSM 273 / BCRC 81028 / 2530) (Pelodictyon luteolum).